The following is a 524-amino-acid chain: REH2-associated factor 1 (524 aa).

The transit peptide at 1–22 directs the protein to the mitochondrion; the sequence is MRRWLVASMAPQLHQLLQPVRR. The C2H2-type 1; atypical zinc finger occupies 48–70; it reads ASCPACSRVVHMCDMLTHLITAH. The C2H2-type 2; atypical zinc-finger motif lies at 121–147; sequence YMCNWCDRRSDVYATRDKFLKHVADVH. The C2H2-type 4 zinc finger occupies 226–249; sequence FPCELCNRTFNSEIDLLQHLETRH. A C2H2-type 3; atypical zinc finger spans residues 286 to 312; it reads VICDLCVSSSKVYKMPSALFSHIRFKH. 4 C2H2-type zinc fingers span residues 334–357, 376–399, 406–429, and 443–465; these read FVCT…NSKH, WWCH…QNKH, HPCP…SLQH, and VKCS…AVKH. A disordered region spans residues 463 to 524; that stretch reads VKHHKKDPRA…KTTEVSEVTS (62 aa). A compositionally biased stretch (low complexity) spans 479–500; it reads APTSASHVAASTSAAVPSEVEA.

Component of the REH2-associated complex (REH2C) composed of helicase REH2, associated factors H2F1 and H2F2, and mRNAs at various editing stages; the formation of the complex is RNA-independent. Within the complex, interacts with REH2; the interaction is direct. Interacts with various editing complexes including the RNA editing core (RECC) complex, the gRNA-binding (GRBC) complex (also known as the MRB1 complex) and the RNA editing mediator (REMC) complex.

It is found in the mitochondrion. Plays an important role in mitochondrial mRNA editing by promoting the assembly of the mRNA editosome. Facilitates the recruitment of mRNA to the REH2C complex and promotes the interaction between various editing complexes including REH2C, GRBC, REMC and RECC complexes. The polypeptide is REH2-associated factor 1 (Trypanosoma brucei brucei (strain 927/4 GUTat10.1)).